The chain runs to 387 residues: Early growth response protein 3 (387 aa).

The segment at 241–283 is disordered; that stretch reads PGFGSLPQPPLTLKPIRPRKYPNRPSKTPLHERPHACPAEGCD. The segment covering 269–283 has biased composition (basic and acidic residues); the sequence is PLHERPHACPAEGCD. C2H2-type zinc fingers lie at residues 275 to 299, 305 to 327, and 333 to 355; these read HACP…LRIH, FQCR…IRTH, and FACE…AKIH. Positions 348–387 are disordered; the sequence is RKRHAKIHLKQKEKKAEKGGAPSASSAPPVSLAPVVTTCA. Residues 350–360 show a composition bias toward basic residues; sequence RHAKIHLKQKE. The segment covering 368–387 has biased composition (low complexity); it reads APSASSAPPVSLAPVVTTCA.

It belongs to the EGR C2H2-type zinc-finger protein family.

It is found in the nucleus. In terms of biological role, probable transcription factor involved in muscle spindle development. This Homo sapiens (Human) protein is Early growth response protein 3 (EGR3).